The sequence spans 253 residues: Imidazole glycerol phosphate synthase subunit HisF (253 aa).

Active-site residues include aspartate 11 and aspartate 130.

The protein belongs to the HisA/HisF family. In terms of assembly, heterodimer of HisH and HisF.

It localises to the cytoplasm. The catalysed reaction is 5-[(5-phospho-1-deoxy-D-ribulos-1-ylimino)methylamino]-1-(5-phospho-beta-D-ribosyl)imidazole-4-carboxamide + L-glutamine = D-erythro-1-(imidazol-4-yl)glycerol 3-phosphate + 5-amino-1-(5-phospho-beta-D-ribosyl)imidazole-4-carboxamide + L-glutamate + H(+). Its pathway is amino-acid biosynthesis; L-histidine biosynthesis; L-histidine from 5-phospho-alpha-D-ribose 1-diphosphate: step 5/9. In terms of biological role, IGPS catalyzes the conversion of PRFAR and glutamine to IGP, AICAR and glutamate. The HisF subunit catalyzes the cyclization activity that produces IGP and AICAR from PRFAR using the ammonia provided by the HisH subunit. In Gluconobacter oxydans (strain 621H) (Gluconobacter suboxydans), this protein is Imidazole glycerol phosphate synthase subunit HisF.